Reading from the N-terminus, the 283-residue chain is Bifunctional protein FolD (283 aa).

NADP(+) is bound by residues 165-167, S190, and T231; that span reads GRS.

This sequence belongs to the tetrahydrofolate dehydrogenase/cyclohydrolase family. As to quaternary structure, homodimer.

The enzyme catalyses (6R)-5,10-methylene-5,6,7,8-tetrahydrofolate + NADP(+) = (6R)-5,10-methenyltetrahydrofolate + NADPH. It carries out the reaction (6R)-5,10-methenyltetrahydrofolate + H2O = (6R)-10-formyltetrahydrofolate + H(+). It participates in one-carbon metabolism; tetrahydrofolate interconversion. In terms of biological role, catalyzes the oxidation of 5,10-methylenetetrahydrofolate to 5,10-methenyltetrahydrofolate and then the hydrolysis of 5,10-methenyltetrahydrofolate to 10-formyltetrahydrofolate. The chain is Bifunctional protein FolD from Nocardia farcinica (strain IFM 10152).